The primary structure comprises 106 residues: ATP-dependent Clp protease adapter protein ClpS (106 aa).

It belongs to the ClpS family. As to quaternary structure, binds to the N-terminal domain of the chaperone ClpA.

Its function is as follows. Involved in the modulation of the specificity of the ClpAP-mediated ATP-dependent protein degradation. The chain is ATP-dependent Clp protease adapter protein ClpS from Pseudoalteromonas atlantica (strain T6c / ATCC BAA-1087).